The following is a 514-amino-acid chain: Cardiolipin synthase 2 (514 aa).

3 helical membrane passes run 7 to 27, 41 to 61, and 71 to 91; these read LIFFILLLFALFVSLRMFIDV, ILGIISILFTVSAFLIGCVIF, and LTWLIVLGIFPVFGFFAYLLF. PLD phosphodiesterase domains lie at 249 to 276 and 427 to 454; these read INYRNHRKIVVIDGNEGFVGGLNIGDEY and EKGFLHSKIVIVDSDLASIGTANMDMRS. Catalysis depends on residues His254, Lys256, Asp261, His432, Lys434, and Asp439.

This sequence belongs to the phospholipase D family. Cardiolipin synthase subfamily.

The protein resides in the cell membrane. The catalysed reaction is 2 a 1,2-diacyl-sn-glycero-3-phospho-(1'-sn-glycerol) = a cardiolipin + glycerol. Its function is as follows. Catalyzes the reversible phosphatidyl group transfer from one phosphatidylglycerol molecule to another to form cardiolipin (CL) (diphosphatidylglycerol) and glycerol. The polypeptide is Cardiolipin synthase 2 (cls2) (Bacillus cereus (strain ATCC 14579 / DSM 31 / CCUG 7414 / JCM 2152 / NBRC 15305 / NCIMB 9373 / NCTC 2599 / NRRL B-3711)).